A 442-amino-acid chain; its full sequence is Amino-acid acetyltransferase (442 aa).

Residues 295-442 (EQARAATIED…RSKVLSKTIS (148 aa)) enclose the N-acetyltransferase domain.

This sequence belongs to the acetyltransferase family. ArgA subfamily.

It is found in the cytoplasm. The catalysed reaction is L-glutamate + acetyl-CoA = N-acetyl-L-glutamate + CoA + H(+). It participates in amino-acid biosynthesis; L-arginine biosynthesis; N(2)-acetyl-L-ornithine from L-glutamate: step 1/4. This Aeromonas salmonicida (strain A449) protein is Amino-acid acetyltransferase.